A 213-amino-acid chain; its full sequence is Macrodontain-1 (213 aa).

3 cysteine pairs are disulfide-bonded: cysteine 23–cysteine 63, cysteine 57–cysteine 96, and cysteine 153–cysteine 201. The active site involves cysteine 26. Residues histidine 159 and asparagine 176 contribute to the active site.

As to quaternary structure, monomer. As to expression, fruits.

With respect to regulation, inhibited by the general cysteine protease inhibitor E64 (L-trans-epoxysuccinyl-leucylamide-(4-guanido)-butane). Cysteine protease that catalyzes the preferential cleavage: Ala-|-Xaa &gt; Gln-|-Xaa &gt; Tyr-Xaa &gt;&gt; Leu-|-Xaa &gt; Gly-|-Xaa. Hydrolyzes the synthetic peptide substrate Bz-Phe-Val-Arg-pNA. The polypeptide is Macrodontain-1 (Ananas macrodontes (False pineapple)).